The chain runs to 218 residues: Holliday junction branch migration complex subunit RuvA (218 aa).

The segment at 1-64 (MIGKITGRLE…EDVMQLFGFT (64 aa)) is domain I. Residues 65–143 (TLTEKEWHRL…SVMGMSDTQA (79 aa)) are domain II. The flexible linker stretch occupies residues 144–164 (TVAAQSSDAVIETRAAPSPVV). The domain III stretch occupies residues 165–218 (QNPSAQAEALSALSNLGYAPGDAAAAVAQAAGELPDAETPDLIRAALKRLAPKG).

It belongs to the RuvA family. Homotetramer. Forms an RuvA(8)-RuvB(12)-Holliday junction (HJ) complex. HJ DNA is sandwiched between 2 RuvA tetramers; dsDNA enters through RuvA and exits via RuvB. An RuvB hexamer assembles on each DNA strand where it exits the tetramer. Each RuvB hexamer is contacted by two RuvA subunits (via domain III) on 2 adjacent RuvB subunits; this complex drives branch migration. In the full resolvosome a probable DNA-RuvA(4)-RuvB(12)-RuvC(2) complex forms which resolves the HJ.

The protein localises to the cytoplasm. In terms of biological role, the RuvA-RuvB-RuvC complex processes Holliday junction (HJ) DNA during genetic recombination and DNA repair, while the RuvA-RuvB complex plays an important role in the rescue of blocked DNA replication forks via replication fork reversal (RFR). RuvA specifically binds to HJ cruciform DNA, conferring on it an open structure. The RuvB hexamer acts as an ATP-dependent pump, pulling dsDNA into and through the RuvAB complex. HJ branch migration allows RuvC to scan DNA until it finds its consensus sequence, where it cleaves and resolves the cruciform DNA. This is Holliday junction branch migration complex subunit RuvA from Roseobacter denitrificans (strain ATCC 33942 / OCh 114) (Erythrobacter sp. (strain OCh 114)).